The primary structure comprises 197 residues: UPF0725 protein At5g41640 (197 aa).

The protein belongs to the UPF0725 (EMB2204) family.

The sequence is that of UPF0725 protein At5g41640 from Arabidopsis thaliana (Mouse-ear cress).